The primary structure comprises 135 residues: MQHLDIAELVRSALEVSGCDPSLIGGIDSHSTIVLDLFALPSICISVKDDDVWIWAQLGADSMVVLQQRAYEILMTIMEGCHFARGGQLLLGEQNGELTLKALVHPDFLSDGEKFSTALNGFYNYLEVFSRSLMR.

It belongs to the SpaK family.

Functionally, involved in a secretory pathway responsible for the surface presentation of determinants needed for the entry of Salmonella species into mammalian cells. In Salmonella typhi, this protein is Surface presentation of antigens protein SpaK (spaK).